A 419-amino-acid chain; its full sequence is Tyrosine--tRNA ligase (419 aa).

Y34 provides a ligand contact to L-tyrosine. Residues 39-48 (PTADSLHIGH) carry the 'HIGH' region motif. Residues Y169, Q173, and D176 each coordinate L-tyrosine. Positions 230-234 (KFGKT) match the 'KMSKS' region motif. Residue K233 participates in ATP binding. The 68-residue stretch at 352–419 (VPLVELLVSA…KKKYYLIRYA (68 aa)) folds into the S4 RNA-binding domain.

Belongs to the class-I aminoacyl-tRNA synthetase family. TyrS type 1 subfamily. Homodimer.

It is found in the cytoplasm. The catalysed reaction is tRNA(Tyr) + L-tyrosine + ATP = L-tyrosyl-tRNA(Tyr) + AMP + diphosphate + H(+). Its function is as follows. Catalyzes the attachment of tyrosine to tRNA(Tyr) in a two-step reaction: tyrosine is first activated by ATP to form Tyr-AMP and then transferred to the acceptor end of tRNA(Tyr). The protein is Tyrosine--tRNA ligase (tyrS) of Geobacillus stearothermophilus (Bacillus stearothermophilus).